We begin with the raw amino-acid sequence, 403 residues long: Imidazolonepropionase (403 aa).

Fe(3+)-binding residues include His-68 and His-70. The Zn(2+) site is built by His-68 and His-70. 4-imidazolone-5-propanoate is bound by residues Arg-77, Tyr-140, and His-173. Tyr-140 provides a ligand contact to N-formimidoyl-L-glutamate. His-238 contacts Fe(3+). A Zn(2+)-binding site is contributed by His-238. Gln-241 contacts 4-imidazolone-5-propanoate. Asp-313 contacts Fe(3+). Asp-313 contacts Zn(2+). The N-formimidoyl-L-glutamate site is built by Asn-315 and Gly-317. A 4-imidazolone-5-propanoate-binding site is contributed by Thr-318.

It belongs to the metallo-dependent hydrolases superfamily. HutI family. Requires Zn(2+) as cofactor. Fe(3+) is required as a cofactor.

It localises to the cytoplasm. The enzyme catalyses 4-imidazolone-5-propanoate + H2O = N-formimidoyl-L-glutamate. It participates in amino-acid degradation; L-histidine degradation into L-glutamate; N-formimidoyl-L-glutamate from L-histidine: step 3/3. Catalyzes the hydrolytic cleavage of the carbon-nitrogen bond in imidazolone-5-propanoate to yield N-formimidoyl-L-glutamate. It is the third step in the universal histidine degradation pathway. In Psychromonas ingrahamii (strain DSM 17664 / CCUG 51855 / 37), this protein is Imidazolonepropionase.